A 332-amino-acid chain; its full sequence is DGAT1/2-independent enzyme synthesizing storage lipids (332 aa).

At 1–10 the chain is on the lumenal side; sequence MIGSNESSTE. The N-linked (GlcNAc...) asparagine glycan is linked to asparagine 5. The chain crosses the membrane as a helical span at residues 11–31; it reads GPIPTSYLSFLAYLLGEWTGV. Residues 32 to 45 are Cytoplasmic-facing; it reads EHTEDYLSYGAYLS. A helical membrane pass occupies residues 46–66; that stretch reads WVLFPLAIVFILPVAIFFFCF. The Lumenal portion of the chain corresponds to 67 to 332; that stretch reads NTSLLLLHIY…ERFQTRQKED (266 aa). Residue histidine 132 is part of the active site. The N-linked (GlcNAc...) asparagine glycan is linked to asparagine 289.

Belongs to the diacylglycerol acyltransferase family. Highly divergent.

The protein localises to the endoplasmic reticulum membrane. It catalyses the reaction a 1,2-diacylglycerol + a 1,2-diacyl-sn-glycero-3-phosphocholine = a triacylglycerol + a 1-acyl-sn-glycero-3-phosphocholine. The catalysed reaction is a 1-O-alkyl-2-acyl-sn-glycero-3-phosphocholine + a 1,2-diacylglycerol = a 1-O-alkyl-sn-glycero-3-phosphocholine + a triacylglycerol. It carries out the reaction a 2-acylglycerol + an acyl-CoA = a 1,2-diacylglycerol + CoA. The enzyme catalyses an acyl-CoA + a 1,2-diacyl-sn-glycerol = a triacyl-sn-glycerol + CoA. It catalyses the reaction 2-(9Z-octadecenoyl)-glycerol + (9Z)-octadecenoyl-CoA = 1,2-di-(9Z-octadecenoyl)-glycerol + CoA. The catalysed reaction is 1,2-di-(9Z-octadecenoyl)-sn-glycerol + (9Z)-octadecenoyl-CoA = 1,2,3-tri-(9Z-octadecenoyl)-glycerol + CoA. Its function is as follows. Catalytic subunit of the alternative triglyceride biosynthesis pathway, which mediates formation of triacylglycerol from diacylglycerol and membrane phospholipids. Synthesizes triacylglycerol at the expense of membrane phospholipids, such as phosphatidylcholine (PC) and its ether-linked form (ePC), thereby altering the composition of membranes. The alternative triglyceride biosynthesis pathway is probably required to provide the energy required for rapid growth when fuel sources are limiting. It maintains mitochondrial function during periods of extracellular lipid starvation. Can also use acyl-CoA as donor: acts as a acyl-CoA:monoacylglycerol acyltransferase (MGAT), but also shows acyl-CoA:diacylglycerol acyltransferase (DGAT) activity. In Gallus gallus (Chicken), this protein is DGAT1/2-independent enzyme synthesizing storage lipids (TMEM68).